The sequence spans 279 residues: DegV domain-containing protein lmo1863 (279 aa).

Residues 4–278 form the DegV domain; that stretch reads IKIITDSTAG…TGAFAFMYYT (275 aa). The hexadecanoate site is built by Ser-62 and Ser-94.

Functionally, may bind long-chain fatty acids, such as palmitate, and may play a role in lipid transport or fatty acid metabolism. This is DegV domain-containing protein lmo1863 from Listeria monocytogenes serovar 1/2a (strain ATCC BAA-679 / EGD-e).